Reading from the N-terminus, the 216-residue chain is Thymidylate kinase (216 aa).

Residue 10-17 coordinates ATP; the sequence is GIDGCGKT.

This sequence belongs to the thymidylate kinase family.

The catalysed reaction is dTMP + ATP = dTDP + ADP. In terms of biological role, phosphorylation of dTMP to form dTDP in both de novo and salvage pathways of dTTP synthesis. In Prochlorococcus marinus (strain MIT 9313), this protein is Thymidylate kinase.